A 666-amino-acid polypeptide reads, in one-letter code: ATP-dependent RNA helicase MSS116, mitochondrial (666 aa).

The N-terminal 22 residues, 1-22, are a transit peptide targeting the mitochondrion; the sequence is MLRHCSLGLVTTQISAIAPLRL. Residues 38–60 are compositionally biased toward basic and acidic residues; it reads RDRRSSRSREDKPYNSRTRRFDD. The disordered stretch occupies residues 38–131; that stretch reads RDRRSSRSRE…KSYSKGGNTS (94 aa). Residues 120–131 are compositionally biased toward polar residues; the sequence is NTKSYSKGGNTS. The Q motif motif lies at 159-187; it reads SLLEKNVISRDLYDSISRMGFEQLTPVQQ. The Helicase ATP-binding domain occupies 192 to 379; sequence PIITNSDSDI…NDIMNKEECL (188 aa). Residue 205-212 coordinates ATP; it reads AKTGTGKT. A DEAD box motif is present at residues 320 to 323; it reads DEAD. The region spanning 408 to 560 is the Helicase C-terminal domain; it reads NLYAAIEHIR…NIRKFEAQPH (153 aa).

It belongs to the DEAD box helicase family. DDX18/HAS1 subfamily.

The protein resides in the mitochondrion matrix. It carries out the reaction ATP + H2O = ADP + phosphate + H(+). Its function is as follows. ATP-dependent RNA helicase required for mitochondrial splicing of group I and II introns. Also required for efficient mitochondrial translation. The protein is ATP-dependent RNA helicase MSS116, mitochondrial (MSS116) of Candida glabrata (strain ATCC 2001 / BCRC 20586 / JCM 3761 / NBRC 0622 / NRRL Y-65 / CBS 138) (Yeast).